Consider the following 291-residue polypeptide: Putative butyrophilin-like protein 10 pseudogene (291 aa).

A signal peptide spans 1–26 (MAVTCDPEAFLSICFVTLVFLQLPLA). Positions 27–146 (SIWKADFDVT…GEATVQVQVA (120 aa)) constitute an Ig-like V-type domain. At 27 to 254 (SIWKADFDVT…RSSQFTAWKA (228 aa)) the chain is on the extracellular side. An intrachain disulfide couples Cys-54 to Cys-128. An N-linked (GlcNAc...) asparagine glycan is attached at Asn-59. Residues 255–275 (ALPLILVAMGLVIAGGICIFW) traverse the membrane as a helical segment. The Cytoplasmic portion of the chain corresponds to 276 to 291 (KRQREKNKASLEEERE).

Belongs to the immunoglobulin superfamily. BTN/MOG family.

It is found in the membrane. This is Putative butyrophilin-like protein 10 pseudogene from Homo sapiens (Human).